A 424-amino-acid chain; its full sequence is Serine--tRNA ligase (424 aa).

L-serine is bound at residue 230-232; the sequence is TAE. 261–263 contributes to the ATP binding site; that stretch reads RSE. Glu284 is a binding site for L-serine. An ATP-binding site is contributed by 348-351; sequence EISS. L-serine is bound at residue Ser384.

This sequence belongs to the class-II aminoacyl-tRNA synthetase family. Type-1 seryl-tRNA synthetase subfamily. As to quaternary structure, homodimer. The tRNA molecule binds across the dimer.

The protein localises to the cytoplasm. It carries out the reaction tRNA(Ser) + L-serine + ATP = L-seryl-tRNA(Ser) + AMP + diphosphate + H(+). It catalyses the reaction tRNA(Sec) + L-serine + ATP = L-seryl-tRNA(Sec) + AMP + diphosphate + H(+). Its pathway is aminoacyl-tRNA biosynthesis; selenocysteinyl-tRNA(Sec) biosynthesis; L-seryl-tRNA(Sec) from L-serine and tRNA(Sec): step 1/1. Catalyzes the attachment of serine to tRNA(Ser). Is also able to aminoacylate tRNA(Sec) with serine, to form the misacylated tRNA L-seryl-tRNA(Sec), which will be further converted into selenocysteinyl-tRNA(Sec). This chain is Serine--tRNA ligase, found in Streptococcus pneumoniae (strain ATCC 700669 / Spain 23F-1).